Here is a 295-residue protein sequence, read N- to C-terminus: Ribosomal protein L11 methyltransferase (295 aa).

S-adenosyl-L-methionine-binding residues include Thr146, Gly167, Asp189, and Asn231.

Belongs to the methyltransferase superfamily. PrmA family.

It localises to the cytoplasm. The catalysed reaction is L-lysyl-[protein] + 3 S-adenosyl-L-methionine = N(6),N(6),N(6)-trimethyl-L-lysyl-[protein] + 3 S-adenosyl-L-homocysteine + 3 H(+). Its function is as follows. Methylates ribosomal protein L11. In Vibrio cholerae serotype O1 (strain M66-2), this protein is Ribosomal protein L11 methyltransferase.